The chain runs to 804 residues: Zinc finger protein 541 (804 aa).

2 disordered regions span residues 21–120 (SKAS…NPDI) and 133–197 (TLDL…GNPR). Residues 285–307 (FICKNCSQMFYTEKGLSSHMCFH) form a C2H2-type 1 zinc finger. Positions 379–426 (MEQEKDGEERDSKESSQQRKRKKRPPPKRLFIPPPPSTAGEPGPAGCH) are disordered. The segment covering 380–395 (EQEKDGEERDSKESSQ) has biased composition (basic and acidic residues). The span at 396–405 (QRKRKKRPPP) shows a compositional bias: basic residues. One can recognise an ELM2 domain in the interval 509–601 (PHINIGSRFQ…VALETLLLRG (93 aa)). The SANT domain maps to 616-667 (TGSDVWTPIEKRLFKKAFYAHKKDFYLIHKTIQTKTVAQCVEYYYIWKKMIK). The disordered stretch occupies residues 680–743 (VKREPEEVER…TPEPSGSVES (64 aa)). The segment covering 690-721 (TEEKVPCSPRERPSHHPIPELKIKTKSYRRES) has biased composition (basic and acidic residues). The C2H2-type 2 zinc finger occupies 747–769 (FPCRECERVFDKIKSRNAHMKRH).

Interacts with DNTTIP1. Identified in a complex with KCDT19, HDAC1 and HSPA2s. Component of a histone deacetylase complex containing DNTTIP1, ZNF541, HDAC1 and HDAC2. Identified in a complex with HDAC1, HDAC2, DNTTIP1 and KCTD19.

The protein localises to the nucleus. In terms of biological role, transcription regulator which is essential for male fertility and for the completion of meiotic prophase in spermatocytes. Regulates progression of the pachytene stage of meiotic prophase by activating the expression of genes involved in meiosis and post-meiosis during spermatogenesis. Maintains the repression of pre-pachytene transcriptional programs, including meiotic double-strand breaks (DSB) formation genes in pachytene spermatocytes and suppresses aberrant DSB formation after mid-pachytene, thus ensuring meiosis progression. This chain is Zinc finger protein 541 (ZNF541), found in Macaca fascicularis (Crab-eating macaque).